Here is a 589-residue protein sequence, read N- to C-terminus: MTVGRTAGGPECAEWSREIFPPKSSSSDTEPEDEQFGEGLVLPRAGKLHEFLSPEEDTDSTSDSTGSFYRTPQVPKQRGRWDVLESLFQSDPDSDLNDAEDEEDLESFFQDKSRGKPQVQDPPSLRHGSMRRCSSMTSLPSDIPKARILPTSDSGPPSQHRSVCSWASSITVPQPFRMTLREARKKAQWLASPASFEQERLQAQKQGEEEAECHRQFRAQPVPAHVYLPLYQEIMERREARRRAGIRKRKELLLSSLKPFSFLEKKEQQKEDAPQRDSAAVAQTKVSPKKATSRKIPKSILEPALGDKLQEAELLRKIRIQMRAMDTLRMASSPVSTARNRAPRTAARTQEEKLSFLQTEFEFQPKVNPVVPDYEGLYKAFQKRAAERRETRETTRNKPFLLRTANLSHTPRSCDAATAGGGKKSPQPTATPLPRSRSLSGLASFSANTLPVHITDATRKRESAVRMSLEKKDKSDMSIQWLEVHKKNCQAMSKSVTLRAKAMDPHKSLEEVFKAKLKENRSNDRKRAKEYKKELEEMKKRIQTRPYLFEQVTKALARKEAEERYRDALKQAGLEEEFVRTKSQGTEAV.

Disordered stretches follow at residues 1–166, 265–297, and 386–444; these read MTVG…VCSW, KKEQQKEDAPQRDSAAVAQTKVSPKKATSRKIP, and AERR…GLAS. The span at 92 to 106 shows a compositional bias: acidic residues; sequence PDSDLNDAEDEEDLE. Polar residues predominate over residues 151–166; it reads TSDSGPPSQHRSVCSW. Positions 265 to 275 are enriched in basic and acidic residues; it reads KKEQQKEDAPQ. A compositionally biased stretch (basic residues) spans 287–297; the sequence is SPKKATSRKIP. Over residues 386 to 396 the composition is skewed to basic and acidic residues; that stretch reads AERRETRETTR. Positions 510–577 form a coiled coil; the sequence is EEVFKAKLKE…ALKQAGLEEE (68 aa).

The protein belongs to the FAM161 family. As to quaternary structure, interacts with FAM161A.

The sequence is that of Protein FAM161B (Fam161b) from Mus musculus (Mouse).